We begin with the raw amino-acid sequence, 328 residues long: Helicase VP6-A (328 aa).

Disordered stretches follow at residues 31-128 (DWTE…TGAN) and 180-237 (VAEQ…SVGI). 3 stretches are compositionally biased toward basic and acidic residues: residues 36-61 (ETNK…EGRN), 71-83 (AKET…DRRI), and 96-109 (PGER…RGDG). Lys-110 provides a ligand contact to ATP. A compositionally biased stretch (gly residues) spans 110-128 (KVGGGGGDADAGVGTTGAN). Composition is skewed to basic and acidic residues over residues 180 to 205 (VAEQ…AAER) and 214 to 230 (PHGD…KTSE).

Belongs to the orbivirus VP6 family. Homohexamer.

The protein localises to the virion. The catalysed reaction is ATP + H2O = ADP + phosphate + H(+). Functionally, ATP dependent RNA helicase essential for RNA packaging and viral transcription. Possesses ss- and dsRNA-binding capacity. This is Helicase VP6-A (Segment-9) from Bluetongue virus 1 (isolate South Africa) (BTV 1).